Here is an 86-residue protein sequence, read N- to C-terminus: Small ribosomal subunit protein bS20 (86 aa).

The segment at 1-25 (MANIKSQMKRIKTNEANRQRNKAVK) is disordered.

Belongs to the bacterial ribosomal protein bS20 family.

Functionally, binds directly to 16S ribosomal RNA. The polypeptide is Small ribosomal subunit protein bS20 (Saccharopolyspora erythraea (strain ATCC 11635 / DSM 40517 / JCM 4748 / NBRC 13426 / NCIMB 8594 / NRRL 2338)).